Here is a 607-residue protein sequence, read N- to C-terminus: NADH-ubiquinone oxidoreductase chain 5 (607 aa).

A run of 16 helical transmembrane segments spans residues 3–23 (IFTT…LISM), 35–55 (YTTT…LMFF), 84–104 (FFSI…MQFS), 117–137 (FIKY…ANNM), 140–160 (LFIG…WWYG), 171–191 (AILY…WFSL), 210–230 (LIPL…FGLH), 241–261 (TPVS…FLLV), 272–292 (FILT…AICA), 301–320 (IIAF…LGMN), 324–344 (LAFL…MCSG), 365–385 (IMPF…GMPF), 405–427 (NAWA…MRII), 457–477 (LAFG…PTSI), 482–502 (MPWF…LIAL), and 586–606 (LYFM…SINL).

This sequence belongs to the complex I subunit 5 family. In terms of assembly, core subunit of respiratory chain NADH dehydrogenase (Complex I) which is composed of 45 different subunits.

The protein resides in the mitochondrion inner membrane. It catalyses the reaction a ubiquinone + NADH + 5 H(+)(in) = a ubiquinol + NAD(+) + 4 H(+)(out). Functionally, core subunit of the mitochondrial membrane respiratory chain NADH dehydrogenase (Complex I) which catalyzes electron transfer from NADH through the respiratory chain, using ubiquinone as an electron acceptor. Essential for the catalytic activity and assembly of complex I. This Mus musculus (Mouse) protein is NADH-ubiquinone oxidoreductase chain 5 (Mtnd5).